The sequence spans 156 residues: Small ribosomal subunit protein uS7 (156 aa).

Belongs to the universal ribosomal protein uS7 family. Part of the 30S ribosomal subunit. Contacts proteins S9 and S11.

In terms of biological role, one of the primary rRNA binding proteins, it binds directly to 16S rRNA where it nucleates assembly of the head domain of the 30S subunit. Is located at the subunit interface close to the decoding center, probably blocks exit of the E-site tRNA. The polypeptide is Small ribosomal subunit protein uS7 (Tremblaya princeps).